A 1782-amino-acid chain; its full sequence is Atrochrysone carboxylic acid synthase (1782 aa).

The segment at 41–270 is N-terminal acylcarrier protein transacylase domain (SAT); it reads HTYTKDRRYP…ALPVYGGLCH (230 aa). Residues 407–841 enclose the Ketosynthase family 3 (KS3) domain; it reads QSKIAIVGMS…GGNSTLAIEE (435 aa). Catalysis depends on for beta-ketoacyl synthase activity residues Cys-580, His-716, and His-759. Residues 946-1266 are malonyl-CoA:ACP transacylase (MAT) domain; that stretch reads FAFTGQGSSY…LGILHCAGVP (321 aa). Residues 1331–1648 are product template (PT) domain; the sequence is TSTVQQIIHE…RILLNRFFSA (318 aa). The interval 1335–1468 is N-terminal hotdog fold; the sequence is QQIIHEQYDG…ATVYYEEASD (134 aa). The region spanning 1335–1643 is the PKS/mFAS DH domain; sequence QQIIHEQYDG…FRRYPRILLN (309 aa). The active-site Proton acceptor; for dehydratase activity is the His-1367. The segment at 1495–1643 is C-terminal hotdog fold; that stretch reads VANRFTRRMA…FRRYPRILLN (149 aa). The Proton donor; for dehydratase activity role is filled by Asp-1554. The tract at residues 1653–1703 is disordered; sequence ARKSTPATSAPAPAPPAGSEALQPKAAPASTPAAPASADAPTTNGVKAAAE. The span at 1678–1695 shows a compositional bias: low complexity; it reads AAPASTPAAPASADAPTT. A Carrier domain is found at 1704-1781; sequence PDANSTAAKA…DLKSWLLEYY (78 aa). At Ser-1741 the chain carries O-(pantetheine 4'-phosphoryl)serine.

Specifically expressed in conidia.

It catalyses the reaction holo-[ACP] + 8 malonyl-CoA + 8 H(+) = atrochrysone carboxyl-[ACP] + 8 CO2 + 8 CoA + 2 H2O. The protein operates within secondary metabolite biosynthesis. Functionally, non-reducing polyketide synthase; part of the gene cluster that mediates the biosynthesis of trypacidin, a mycotoxin with antiprotozoal activity and that plays a role in the infection process. The pathway begins with the synthesis of atrochrysone thioester by the polyketide synthase (PKS) tpcC. The atrochrysone carboxyl ACP thioesterase tpcB then breaks the thioester bond and releases the atrochrysone carboxylic acid from tpcC. The decarboxylase tpcK converts atrochrysone carboxylic acid to atrochrysone which is further reduced into emodin anthrone. The next step is performed by the emodin anthrone oxygenase tpcL that catalyzes the oxidation of emodin anthrone to emodin. Emodin O-methyltransferase encoded by tpcA catalyzes methylation of the 8-hydroxy group of emodin to form questin. Ring cleavage of questin by questin oxidase tpcI leads to desmethylsulochrin via several intermediates including questin epoxide. Another methylation step catalyzed by tpcM leads to the formation of sulochrin which is further converted to monomethylsulfochrin by tpcH. Finally, the tpcJ catalyzes the conversion of monomethylsulfochrin to trypacidin. Trypacidin is toxic for human pulmonary and bronchial epithelial cells by initiating the intracellular formation of nitric oxide (NO) and hydrogen peroxide (H(2)O(2)), thus triggering host necrotic cell death. The trypacidin pathway is also able to produce endocrocin via a distinct route from the endocrocin Enc pathway. This is Atrochrysone carboxylic acid synthase from Aspergillus fumigatus (strain ATCC MYA-4609 / CBS 101355 / FGSC A1100 / Af293) (Neosartorya fumigata).